The sequence spans 20 residues: Toxin b subunit beta (20 aa).

As to quaternary structure, toxin b is a heterodimer composed of toxin alpha and toxin beta. Expressed by the venom gland.

The protein localises to the secreted. Its function is as follows. Binds to sodium channels (Nav) and affects the channel activation process. In Androctonus crassicauda (Arabian fat-tailed scorpion), this protein is Toxin b subunit beta.